The following is a 71-amino-acid chain: Large ribosomal subunit protein bL31 (71 aa).

Cysteine 16, cysteine 18, cysteine 38, and cysteine 41 together coordinate Zn(2+).

It belongs to the bacterial ribosomal protein bL31 family. Type A subfamily. As to quaternary structure, part of the 50S ribosomal subunit. The cofactor is Zn(2+).

In terms of biological role, binds the 23S rRNA. The protein is Large ribosomal subunit protein bL31 of Laribacter hongkongensis (strain HLHK9).